A 355-amino-acid chain; its full sequence is Nicotinate-nucleotide--dimethylbenzimidazole phosphoribosyltransferase (355 aa).

Glu321 functions as the Proton acceptor in the catalytic mechanism.

The protein belongs to the CobT family.

It carries out the reaction 5,6-dimethylbenzimidazole + nicotinate beta-D-ribonucleotide = alpha-ribazole 5'-phosphate + nicotinate + H(+). It functions in the pathway nucleoside biosynthesis; alpha-ribazole biosynthesis; alpha-ribazole from 5,6-dimethylbenzimidazole: step 1/2. In terms of biological role, catalyzes the synthesis of alpha-ribazole-5'-phosphate from nicotinate mononucleotide (NAMN) and 5,6-dimethylbenzimidazole (DMB). The protein is Nicotinate-nucleotide--dimethylbenzimidazole phosphoribosyltransferase of Desulfotalea psychrophila (strain LSv54 / DSM 12343).